The following is a 254-amino-acid chain: Small ribosomal subunit protein uS3 (254 aa).

Residues 38-106 (IRKYVLARIP…DVQINIFEIK (69 aa)) enclose the KH type-2 domain. Over residues 215 to 238 (NVGNAASGASSSSNNDNASPNQGG) the composition is skewed to low complexity. The interval 215 to 254 (NVGNAASGASSSSNNDNASPNQGGPRRKRGGEGNRKKSNK) is disordered. The segment covering 244-254 (GGEGNRKKSNK) has biased composition (basic and acidic residues).

The protein belongs to the universal ribosomal protein uS3 family. As to quaternary structure, part of the 30S ribosomal subunit. Forms a tight complex with proteins S10 and S14.

Functionally, binds the lower part of the 30S subunit head. Binds mRNA in the 70S ribosome, positioning it for translation. This Cytophaga hutchinsonii (strain ATCC 33406 / DSM 1761 / CIP 103989 / NBRC 15051 / NCIMB 9469 / D465) protein is Small ribosomal subunit protein uS3.